The primary structure comprises 546 residues: Peroxisomal OPC-8:0-CoA ligase 1 (546 aa).

Residues serine 197, serine 198, glycine 199, threonine 200, threonine 201, and lysine 205 each coordinate ATP. Lysine 265 is a binding site for CoA. The segment at 267 to 338 (EMHEMMSAIG…EKYPTVKILQ (72 aa)) is SBD1. Glutamine 338, glycine 339, threonine 343, aspartate 424, and arginine 439 together coordinate ATP. The SBD2 stretch occupies residues 339–403 (GYGLTESTGI…LKGPSIMKGY (65 aa)). 2 residues coordinate CoA: lysine 447 and glycine 448. Lysine 530 contacts ATP. The Microbody targeting signal motif lies at 544–546 (SKL).

The protein belongs to the ATP-dependent AMP-binding enzyme family. The cofactor is Mg(2+). In terms of tissue distribution, expressed at low levels in seedlings, cotyledons, leaves, hypocotyls and roots.

Its subcellular location is the peroxisome. The catalysed reaction is (9S,13S,15Z)-12-oxophyto-10,15-dienoate + ATP + CoA = (10Z,15Z)-12-oxophytodienoyl-CoA + AMP + diphosphate. It carries out the reaction (1S,2S)-OPC-8 + ATP + CoA = OPC8-CoA + AMP + diphosphate. The enzyme catalyses hexadecanoate + ATP + CoA = hexadecanoyl-CoA + AMP + diphosphate. It catalyses the reaction (9Z)-octadecenoate + ATP + CoA = (9Z)-octadecenoyl-CoA + AMP + diphosphate. The catalysed reaction is tetradecanoate + ATP + CoA = tetradecanoyl-CoA + AMP + diphosphate. It carries out the reaction decanoate + ATP + CoA = decanoyl-CoA + AMP + diphosphate. The enzyme catalyses dodecanoate + ATP + CoA = dodecanoyl-CoA + AMP + diphosphate. It catalyses the reaction octadecanoate + ATP + CoA = octadecanoyl-CoA + AMP + diphosphate. The catalysed reaction is OPC-6 + ATP + CoA = OPC-6-CoA + AMP + diphosphate. It carries out the reaction dinor-OPDA + ATP + CoA = dinor-OPDA-CoA + AMP + diphosphate. In terms of biological role, contributes to jasmonic acid biosynthesis by initiating the beta-oxidative chain shortening of its precursors. Converts 12-oxo-phytodienoic acid (OPDA) and 3-oxo-2-(2'-pentenyl)-cyclopentane-1-octanoic acid (OPC-8:0) into OPDA-CoA and OPC-8:0-CoA, respectively. Follows a two-step reaction mechanism, wherein the carboxylate substrate first undergoes adenylation by ATP, followed by a thioesterification in the presence of CoA to yield the final CoA thioester. The protein is Peroxisomal OPC-8:0-CoA ligase 1 of Arabidopsis thaliana (Mouse-ear cress).